The following is a 311-amino-acid chain: Homeobox-leucine zipper protein HOX1 (311 aa).

2 disordered regions span residues 29–69 and 97–160; these read AGGA…SDHR and AETT…KKLR. Over residues 119–145 the composition is skewed to low complexity; it reads SSPNSTLSSLSGKRGAPSAATAAAAAA. Positions 154–213 form a DNA-binding region, homeobox; the sequence is GSRKKLRLSKDQAAVLEDTFKEHNTLNPKQKAALARQLNLKPRQVEVWFQNRRARTKLKQ. The segment at 212 to 256 is leucine-zipper; it reads KQTEVDCELLKRCCETLTDENRRLHRELQELRALKLATAAAAPHH. The tract at residues 279–311 is disordered; the sequence is SAATTTRNNSGAAPARPVPTRPWPPAAAQRSSA. Polar residues predominate over residues 280-289; it reads AATTTRNNSG. The segment covering 294–303 has biased composition (pro residues); sequence RPVPTRPWPP.

This sequence belongs to the HD-ZIP homeobox family. Class II subfamily. In terms of assembly, homodimer. May form a heterodimer with HOX2, HOX3 or HOX7. Expressed in root provascular and vascular cylinder, provascular and vascular strands of leaves, provascular and vascular strands of the whole panicle, in mature embryo provascular bundles of scutellum and embryonic axis and provascular and vascular strands of young immature spikelet organs. Expressed in differentiating and differentiated xylem and phloem elements, and in outer and inner bundle sheath cells of all vascular bundles. Expressed in auricles, ligules, culm, guard cells brac hairs and pollen.

Its subcellular location is the nucleus. Its function is as follows. Probable transcription repressor involved leaf development. Binds to the DNA sequence 5'-CAAT[GC]ATTG-3'. May act as a regulatory switch to specify provascular cell fate. This Oryza sativa subsp. indica (Rice) protein is Homeobox-leucine zipper protein HOX1 (HOX1).